The chain runs to 554 residues: Wee1-like protein kinase 2-B (554 aa).

Disordered regions lie at residues 1–86 (MRMA…GGEC) and 145–182 (TLVN…DSQM). Ser38 is modified (phosphoserine). Polar residues-rich tracts occupy residues 38 to 48 (SPVSSWRTNNC) and 147 to 163 (VNVN…THFQ). The 275-residue stretch at 213 to 487 (FLEIEKIGAG…AKNSVLRRCV (275 aa)) folds into the Protein kinase domain. ATP contacts are provided by residues 219–227 (IGAGEFGSV) and Lys242. Asp340 serves as the catalytic Proton acceptor. Positions 345 and 377 each coordinate Mg(2+). Residues 490–516 (AAELQKQLNVEKFKTAMLERELQAAKL) are a coiled coil.

Belongs to the protein kinase superfamily. Ser/Thr protein kinase family. WEE1 subfamily. As to quaternary structure, interacts with cdca3. In terms of processing, ubiquitinated and degraded at the onset of G2/M phase. Post-translationally, phosphorylated during M and G1 phases. Interacts with cdca3 when phosphorylated at Ser-38.

It localises to the nucleus. The catalysed reaction is L-tyrosyl-[protein] + ATP = O-phospho-L-tyrosyl-[protein] + ADP + H(+). Oocyte and early embryo-specific protein tyrosine kinase that phosphorylates and inhibits cdk1 and acts as a regulator of meiosis in oocytes. Required to ensure the meiotic cell cycle in oocytes by phosphorylating cdk1 at 'Tyr-15', leading to inhibit cdk1 activity and prevent meiosis. This Xenopus laevis (African clawed frog) protein is Wee1-like protein kinase 2-B (wee2-b).